The primary structure comprises 397 residues: GTPase Obg (397 aa).

The 159-residue stretch at 1–159 (MKFVDEATII…RNLRLELKVL (159 aa)) folds into the Obg domain. The tract at residues 128–148 (TRFKSSVNRAPRQTSKGSEGE) is disordered. Positions 129 to 144 (RFKSSVNRAPRQTSKG) are enriched in polar residues. The OBG-type G domain maps to 160–333 (ADVGLLGLPN…LVQAVMRWIE (174 aa)). GTP-binding positions include 166-173 (GLPNAGKS), 191-195 (FTTLV), 213-216 (DIPG), 283-286 (NKVD), and 314-316 (SAL). Residues Ser173 and Thr193 each contribute to the Mg(2+) site. The span at 336-347 (AEQEADNPDFAE) shows a compositional bias: acidic residues. The tract at residues 336–397 (AEQEADNPDF…YDVEVVYAPE (62 aa)) is disordered. Residues 349-370 (EAARRRRMDEEARQKIEADRQA) are compositionally biased toward basic and acidic residues. The segment covering 378–390 (DDDDDFDDDDYDV) has biased composition (acidic residues).

The protein belongs to the TRAFAC class OBG-HflX-like GTPase superfamily. OBG GTPase family. As to quaternary structure, monomer. Requires Mg(2+) as cofactor.

The protein localises to the cytoplasm. Its function is as follows. An essential GTPase which binds GTP, GDP and possibly (p)ppGpp with moderate affinity, with high nucleotide exchange rates and a fairly low GTP hydrolysis rate. Plays a role in control of the cell cycle, stress response, ribosome biogenesis and in those bacteria that undergo differentiation, in morphogenesis control. The polypeptide is GTPase Obg (Marinobacter nauticus (strain ATCC 700491 / DSM 11845 / VT8) (Marinobacter aquaeolei)).